Reading from the N-terminus, the 92-residue chain is WAP four-disulfide core domain protein 12 (92 aa).

An N-terminal signal peptide occupies residues 1–23; the sequence is MGSSRFLVLMVSLALVTLVAAEG. A WAP domain is found at 27-74; it reads NIEKPEVCPADNVRCIKSDPPQCHTDQDCQGIRKCCYLHCGFKCVIPV. Disulfide bonds link cysteine 34-cysteine 62, cysteine 41-cysteine 66, cysteine 49-cysteine 61, and cysteine 55-cysteine 70.

It is found in the secreted. Its function is as follows. Antibacterial protein. Putative acid-stable proteinase inhibitor. The polypeptide is WAP four-disulfide core domain protein 12 (WFDC12) (Aotus nancymaae (Ma's night monkey)).